We begin with the raw amino-acid sequence, 195 residues long: Transcriptional regulator LdrP (195 aa).

The HTH crp-type domain maps to 110-182; it reads GELRARIARY…YRRVYLLDLA (73 aa). The segment at residues 142–161 is a DNA-binding region (H-T-H motif); the sequence is HEEIADATASIRESVSKVLA.

Its function is as follows. Activates transcription. Positively regulates PcrtB promoter upstream of the crtB operon in a cAMP-independent manner. Regulated genes include genes encoding DNA photolyase, phytoene synthase and cytochrome P450 monooxygenase, which are involved in carotenoid biosynthesis. Positively regulates the light-inducible gene cluster in the megaplasmid in a cAMP-independent manner. The polypeptide is Transcriptional regulator LdrP (Thermus thermophilus (strain ATCC BAA-163 / DSM 7039 / HB27)).